The primary structure comprises 154 residues: Myoglobin (154 aa).

The region spanning 2–148 is the Globin domain; it reads GLSDGEWQLV…FRNDMAAQYK (147 aa). At Ser-4 the chain carries Phosphoserine. A nitrite-binding site is contributed by His-65. His-65 provides a ligand contact to O2. Thr-68 is modified (phosphothreonine). Position 94 (His-94) interacts with heme b.

As to quaternary structure, monomer.

The protein resides in the cytoplasm. The protein localises to the sarcoplasm. The catalysed reaction is Fe(III)-heme b-[protein] + nitric oxide + H2O = Fe(II)-heme b-[protein] + nitrite + 2 H(+). It carries out the reaction H2O2 + AH2 = A + 2 H2O. Functionally, monomeric heme protein which primary function is to store oxygen and facilitate its diffusion within muscle tissues. Reversibly binds oxygen through a pentacoordinated heme iron and enables its timely and efficient release as needed during periods of heightened demand. Depending on the oxidative conditions of tissues and cells, and in addition to its ability to bind oxygen, it also has a nitrite reductase activity whereby it regulates the production of bioactive nitric oxide. Under stress conditions, like hypoxia and anoxia, it also protects cells against reactive oxygen species thanks to its pseudoperoxidase activity. The protein is Myoglobin of Rangifer tarandus (Reindeer).